A 75-amino-acid polypeptide reads, in one-letter code: uncharacterized protein (75 aa).

This is an uncharacterized protein from Acidianus filamentous virus 1 (isolate United States/Yellowstone) (AFV-1).